Consider the following 59-residue polypeptide: Large ribosomal subunit protein uL30 (59 aa).

This sequence belongs to the universal ribosomal protein uL30 family. In terms of assembly, part of the 50S ribosomal subunit.

The protein is Large ribosomal subunit protein uL30 of Bacillus licheniformis (strain ATCC 14580 / DSM 13 / JCM 2505 / CCUG 7422 / NBRC 12200 / NCIMB 9375 / NCTC 10341 / NRRL NRS-1264 / Gibson 46).